A 234-amino-acid chain; its full sequence is Alpha N-terminal protein methyltransferase 1 (234 aa).

S-adenosyl-L-methionine is bound by residues G71, R76, 93–95 (DVV), 120–121 (LQ), and Q136.

It belongs to the methyltransferase superfamily. NTM1 family. In terms of tissue distribution, expressed in uterine cells and PVT neurons of the tail. Expressed in pharynx, intestine and DVB tail neuron.

It catalyses the reaction N-terminal L-alanyl-L-prolyl-L-lysyl-[protein] + 3 S-adenosyl-L-methionine = N-terminal N,N,N-trimethyl-L-alanyl-L-prolyl-L-lysyl-[protein] + 3 S-adenosyl-L-homocysteine + 3 H(+). The catalysed reaction is N-terminal L-seryl-L-prolyl-L-lysyl-[protein] + 3 S-adenosyl-L-methionine = N-terminal N,N,N-trimethyl-L-seryl-L-prolyl-L-lysyl-[protein] + 3 S-adenosyl-L-homocysteine + 3 H(+). It carries out the reaction N-terminal L-prolyl-L-prolyl-L-lysyl-[protein] + 2 S-adenosyl-L-methionine = N-terminal N,N-dimethyl-L-prolyl-L-prolyl-L-lysyl-[protein] + 2 S-adenosyl-L-homocysteine + 2 H(+). In terms of biological role, alpha-N-methyltransferase that methylates the N-terminus of target proteins containing the N-terminal motif [Ala/Pro/Ser]-Pro-Lys when the initiator Met is cleaved. Specifically catalyzes mono-, di- or tri-methylation of exposed alpha-amino group of Ala or Ser residue in the [Ala/Ser]-Pro-Lys motif and mono- or di-methylation of Pro in the Pro-Pro-Lys motif. Probably required for the synthesis of neurotransmitter melatonin from serotonin, which plays a role in promoting a sleep-like state, called lethargus, during larval development. The sequence is that of Alpha N-terminal protein methyltransferase 1 from Caenorhabditis elegans.